Here is a 1275-residue protein sequence, read N- to C-terminus: Histone-lysine N-methyltransferase PRDM16 (1275 aa).

The span at methionine 1 to leucine 10 shows a compositional bias: basic residues. Residues methionine 1–serine 66 form a disordered region. An SET domain is found at proline 82–lysine 211. A C2H2-type 1; degenerate zinc finger spans residues phenylalanine 230–serine 255. 5 consecutive C2H2-type zinc fingers follow at residues histidine 282 to histidine 304, tyrosine 310 to histidine 332, phenylalanine 338 to histidine 361, histidine 367 to histidine 389, and phenylalanine 395 to histidine 417. A C2H2-type 7; atypical zinc finger spans residues isoleucine 424–cysteine 446. Disordered stretches follow at residues valine 592–glycine 658 and alanine 789–glutamate 838. A compositionally biased stretch (low complexity) spans threonine 610–aspartate 625. Composition is skewed to basic and acidic residues over residues aspartate 631–proline 648 and arginine 821–glycine 835. Residues glutamate 680–serine 1038 form an interaction with CTBP1, CTBP2 and ZNF516 region. The segment at proline 740–leucine 1275 is mediates interaction with SKI and regulation of TGF-beta signaling. C2H2-type zinc fingers lie at residues tyrosine 951–histidine 973, tyrosine 979–histidine 1002, and phenylalanine 1008–histidine 1030. Disordered regions lie at residues leucine 1027–leucine 1065 and glutamate 1084–aspartate 1169. The span at serine 1038–glutamate 1058 shows a compositional bias: polar residues. A compositionally biased stretch (acidic residues) spans aspartate 1117–serine 1133.

This sequence belongs to the PRDM16 family. Interacts with CEBPA, CEBPB and CEBPD; the interaction is direct. Interacts with PPARG and PPARA; controls brown adipocytes. Interacts with CTBP1 and CTBP2; represses the expression of WAT-specific genes. Interacts with PPARGC1A and PPARGC1B; interaction with PPARGC1A or PPARGC1B activates the transcription of BAT-specific gene. Interacts with HDAC1, SKI and SMAD2; the interaction with SKI promotes the recruitment of SMAD3-HDAC1 complex on the promoter of TGF-beta target genes. Interacts with ZNF516; the interaction is direct and may play a role in the transcription of brown adipose tissue-specific gene. As to expression, enriched in BAT compared to WAT. Detected in heart, lung, kidney and brain. Expressed in nuclei of cardiomyocytes.

The protein localises to the nucleus. It localises to the cytoplasm. The enzyme catalyses L-lysyl(9)-[histone H3] + S-adenosyl-L-methionine = N(6)-methyl-L-lysyl(9)-[histone H3] + S-adenosyl-L-homocysteine + H(+). Its function is as follows. Binds DNA and functions as a transcriptional regulator. Displays histone methyltransferase activity and monomethylates 'Lys-9' of histone H3 (H3K9me1) in vitro. Probably catalyzes the monomethylation of free histone H3 in the cytoplasm which is then transported to the nucleus and incorporated into nucleosomes where SUV39H methyltransferases use it as a substrate to catalyze histone H3 'Lys-9' trimethylation. Likely to be one of the primary histone methyltransferases along with MECOM/PRDM3 that direct cytoplasmic H3K9me1 methylation. Functions in the differentiation of brown adipose tissue (BAT) which is specialized in dissipating chemical energy in the form of heat in response to cold or excess feeding while white adipose tissue (WAT) is specialized in the storage of excess energy and the control of systemic metabolism. Together with CEBPB, regulates the differentiation of myoblastic precursors into brown adipose cells. Functions as a repressor of TGF-beta signaling. This Mus musculus (Mouse) protein is Histone-lysine N-methyltransferase PRDM16.